Reading from the N-terminus, the 242-residue chain is Ditrans,polycis-undecaprenyl-diphosphate synthase ((2E,6E)-farnesyl-diphosphate specific) (242 aa).

Asp21 is a catalytic residue. Residue Asp21 coordinates Mg(2+). Substrate contacts are provided by residues 22–25 (GNGR), Trp26, Arg34, His38, and 66–68 (SSE). Asn69 acts as the Proton acceptor in catalysis. Substrate is bound by residues Trp70, Arg72, Arg189, and 195 to 197 (RIS). Residue Glu208 coordinates Mg(2+).

The protein belongs to the UPP synthase family. As to quaternary structure, homodimer. The cofactor is Mg(2+).

It carries out the reaction 8 isopentenyl diphosphate + (2E,6E)-farnesyl diphosphate = di-trans,octa-cis-undecaprenyl diphosphate + 8 diphosphate. Functionally, catalyzes the sequential condensation of isopentenyl diphosphate (IPP) with (2E,6E)-farnesyl diphosphate (E,E-FPP) to yield (2Z,6Z,10Z,14Z,18Z,22Z,26Z,30Z,34E,38E)-undecaprenyl diphosphate (di-trans,octa-cis-UPP). UPP is the precursor of glycosyl carrier lipid in the biosynthesis of bacterial cell wall polysaccharide components such as peptidoglycan and lipopolysaccharide. The chain is Ditrans,polycis-undecaprenyl-diphosphate synthase ((2E,6E)-farnesyl-diphosphate specific) from Haemophilus ducreyi (strain 35000HP / ATCC 700724).